The following is a 509-amino-acid chain: MSRYLHTLLKAIDLQVRSGLANPEIKNLSTDSREIEKGDLFLGLDGEKVDGGNFWAKAIERGACAAIISKKASLLNPPTNEDPVVILPEPVSLFMGKLAADFWGKPSSEICLIGITGTNGKTTTSFLIEFLTTSLGHPSALFGTLINRWPNHEETSKYTTTFAVPLQAKLRKAVQAGVEYGAMEVSSHALSQNRVAGCDFNGAVFTNLSRDHLDYHDSMESYFEAKASLFRSHLIEDGGPRSVINIDDKWGAKLAKELNKKCWTCSLKENSQTREKADLYISNLQIMQDGYKGKLHTPFGVENFISPLIGEFNLMNMLQAVGILVQRGLPLNDLLAALNKFPGVPGRMQLINMDGFKVKEGYPLVIVDYAHTPDGLQNALIASRSLTKRRLICVFGCGGDRDKGKRSKMGEVAAKFADYIVVTSDNPRQEDPIEIIKDIGKGITIDSEISVEPERSIAIQLAIAKAKKNDVVLIAGKGHEDYQILKDQTIYFDDREQARKALSLKTDFI.

A UDP-N-acetyl-alpha-D-muramoyl-L-alanyl-D-glutamate-binding site is contributed by serine 32. 117 to 123 (GTNGKTT) serves as a coordination point for ATP. UDP-N-acetyl-alpha-D-muramoyl-L-alanyl-D-glutamate contacts are provided by residues 159–160 (TT), serine 186, glutamine 192, and arginine 194. At lysine 226 the chain carries N6-carboxylysine. Residues arginine 401, 425–428 (DNPR), glycine 476, and glutamate 480 each bind meso-2,6-diaminopimelate. A Meso-diaminopimelate recognition motif motif is present at residues 425–428 (DNPR).

The protein belongs to the MurCDEF family. MurE subfamily. The cofactor is Mg(2+). Post-translationally, carboxylation is probably crucial for Mg(2+) binding and, consequently, for the gamma-phosphate positioning of ATP.

Its subcellular location is the cytoplasm. The enzyme catalyses UDP-N-acetyl-alpha-D-muramoyl-L-alanyl-D-glutamate + meso-2,6-diaminopimelate + ATP = UDP-N-acetyl-alpha-D-muramoyl-L-alanyl-gamma-D-glutamyl-meso-2,6-diaminopimelate + ADP + phosphate + H(+). Its pathway is cell wall biogenesis; peptidoglycan biosynthesis. In terms of biological role, catalyzes the addition of meso-diaminopimelic acid to the nucleotide precursor UDP-N-acetylmuramoyl-L-alanyl-D-glutamate (UMAG) in the biosynthesis of bacterial cell-wall peptidoglycan. In Prochlorococcus marinus (strain NATL2A), this protein is UDP-N-acetylmuramoyl-L-alanyl-D-glutamate--2,6-diaminopimelate ligase.